A 157-amino-acid chain; its full sequence is WPP domain-containing protein 3 (157 aa).

The segment covering 1–20 (MAETADTINTTVSTPQPQLE) has biased composition (polar residues). Positions 1–41 (MAETADTINTTVSTPQPQLESRSDETSCLQKHRSDATSEVT) are disordered. The segment covering 32–41 (HRSDATSEVT) has biased composition (basic and acidic residues). The interval 37–138 (TSEVTKEEKS…IESAEVRFKA (102 aa)) is WPP; degenerate.

As to expression, expressed in roots, stems and leaves.

It localises to the cytoplasm. Its subcellular location is the nucleus. Regulates the mitotic activity in roots. The chain is WPP domain-containing protein 3 (WPP3) from Arabidopsis thaliana (Mouse-ear cress).